The chain runs to 72 residues: Bowman-Birk type proteinase inhibitor (72 aa).

7 disulfide bridges follow: Cys-8/Cys-61, Cys-9/Cys-24, Cys-12/Cys-57, Cys-14/Cys-22, Cys-31/Cys-38, Cys-35/Cys-50, and Cys-40/Cys-48.

Belongs to the Bowman-Birk serine protease inhibitor family.

Its function is as follows. This inhibitor has two domains, each with separate antiprotease activity. 1 mole of inhibitor inhibits either 1 mole of trypsin or 2 moles of chymotrypsin, stoichiometrically. The sequence is that of Bowman-Birk type proteinase inhibitor from Vicia sativa subsp. nigra (Common vetch).